The primary structure comprises 244 residues: rRNA adenine N-6-methyltransferase (244 aa).

Asparagine 11, isoleucine 13, glycine 38, glutamate 59, aspartate 84, and asparagine 101 together coordinate S-adenosyl-L-methionine.

The protein belongs to the class I-like SAM-binding methyltransferase superfamily. rRNA adenine N(6)-methyltransferase family.

The enzyme catalyses adenosine(2085) in 23S rRNA + 2 S-adenosyl-L-methionine = N(6)-dimethyladenosine(2085) in 23S rRNA + 2 S-adenosyl-L-homocysteine + 2 H(+). In terms of biological role, this protein produces a dimethylation of the adenine residue at position 2085 in 23S rRNA, resulting in reduced affinity between ribosomes and macrolide-lincosamide-streptogramin B antibiotics. The chain is rRNA adenine N-6-methyltransferase (ermC) from Staphylococcus aureus.